The primary structure comprises 784 residues: Toll-like receptor 2 (784 aa).

The first 20 residues, 1-20 (MPRALWTAWVWAVIILSMEG), serve as a signal peptide directing secretion. Topologically, residues 21–587 (ASHQASSLSC…ARLSLSECHR (567 aa)) are extracellular. The cysteines at positions 30 and 36 are disulfide-linked. 19 LRR repeats span residues 54 to 77 (VKSL…RCVN), 78 to 101 (LKTL…HLRN), 102 to 125 (LEYL…SLYA), 126 to 150 (LKFL…HLPN), 151 to 175 (LRTL…GLIF), 176 to 199 (LEEL…SIQN), 200 to 223 (ISHL…IVSS), 224 to 250 (LDCL…MNTS), 251 to 278 (VKKL…YVSG), 279 to 308 (ILEV…HLGN), 309 to 337 (VETL…LTGK), 338 to 361 (VKRV…HLKS), 362 to 388 (LEYL…AWPF), 389 to 414 (LQTL…TLEN), 415 to 437 (LNNL…WPGK), 438 to 457 (MKQL…CLPQ), 458 to 478 (TLEI…ILPQ), 479 to 500 (LKEL…FLPV), and 501 to 524 (LSVM…SFQQ). N114 carries N-linked (GlcNAc...) asparagine glycosylation. N199 carries an N-linked (GlcNAc...) asparagine glycan. The N-linked (GlcNAc...) asparagine glycan is linked to N248. A disulfide bond links C353 and C382. Cysteines 432 and 454 form a disulfide. Residue N442 is glycosylated (N-linked (GlcNAc...) asparagine). The 55-residue stretch at 525–579 (LKTLEAGGNNFICSCDFLSFTQGQQALGRVLVDWPAEYRCDSPSHVRGQRVQDAR) folds into the LRRCT domain. Residues 588-608 (AAVVSAACCALFLLLLLTGVL) form a helical membrane-spanning segment. Residues 609–784 (CHRFHGLWYM…WLNLRAAIRS (176 aa)) lie on the Cytoplasmic side of the membrane. The 144-residue stretch at 639 to 782 (ICYDAFVSYS…GFWLNLRAAI (144 aa)) folds into the TIR domain. K754 participates in a covalent cross-link: Glycyl lysine isopeptide (Lys-Gly) (interchain with G-Cter in ubiquitin). The short motif at 761–778 (YLEWPVDETQQEGFWLNL) is the ATG16L1-binding motif element.

This sequence belongs to the Toll-like receptor family. As to quaternary structure, interacts with LY96, TLR1 and TLR6 (via extracellular domain). TLR2 seems to exist in heterodimers with either TLR1 or TLR6 before stimulation by the ligand. The heterodimers form bigger oligomers in response to their corresponding ligands as well as further heterotypic associations with other receptors such as CD14 and/or CD36. Binds MYD88 (via TIR domain). Interacts with TICAM1. Interacts with CNPY3. Interacts with ATG16L1. Interacts with PPP1R11. Interacts with TICAM2. Interacts with TIRAP. Post-translationally, ubiquitinated at Lys-754 by PPP1R11, leading to its degradation. Deubiquitinated by USP2. Glycosylation of Asn-442 is critical for secretion of the N-terminal ectodomain of TLR2.

It localises to the membrane. It is found in the cytoplasmic vesicle. The protein resides in the phagosome membrane. Its subcellular location is the membrane raft. Cooperates with LY96 to mediate the innate immune response to bacterial lipoproteins and other microbial cell wall components. Cooperates with TLR1 or TLR6 to mediate the innate immune response to bacterial lipoproteins or lipopeptides. Acts via MYD88 and TRAF6, leading to NF-kappa-B activation, cytokine secretion and the inflammatory response. May also promote apoptosis in response to lipoproteins. Forms activation clusters composed of several receptors depending on the ligand, these clusters trigger signaling from the cell surface and subsequently are targeted to the Golgi in a lipid-raft dependent pathway. Forms the cluster TLR2:TLR6:CD14:CD36 in response to diacylated lipopeptides and TLR2:TLR1:CD14 in response to triacylated lipopeptides. The polypeptide is Toll-like receptor 2 (TLR2) (Bubalus bubalis (Domestic water buffalo)).